Consider the following 188-residue polypeptide: Elongation factor P (188 aa).

Lys-34 is subject to N6-(3,6-diaminohexanoyl)-5-hydroxylysine.

It belongs to the elongation factor P family. May be beta-lysylated on the epsilon-amino group of Lys-34 by the combined action of EpmA and EpmB, and then hydroxylated on the C5 position of the same residue by EpmC (if this protein is present). Lysylation is critical for the stimulatory effect of EF-P on peptide-bond formation. The lysylation moiety may extend toward the peptidyltransferase center and stabilize the terminal 3-CCA end of the tRNA. Hydroxylation of the C5 position on Lys-34 may allow additional potential stabilizing hydrogen-bond interactions with the P-tRNA.

It is found in the cytoplasm. It functions in the pathway protein biosynthesis; polypeptide chain elongation. In terms of biological role, involved in peptide bond synthesis. Alleviates ribosome stalling that occurs when 3 or more consecutive Pro residues or the sequence PPG is present in a protein, possibly by augmenting the peptidyl transferase activity of the ribosome. Modification of Lys-34 is required for alleviation. This Vibrio cholerae serotype O1 (strain ATCC 39541 / Classical Ogawa 395 / O395) protein is Elongation factor P.